The chain runs to 258 residues: Imidazole glycerol phosphate synthase subunit HisF (258 aa).

Catalysis depends on residues Asp11 and Asp130.

The protein belongs to the HisA/HisF family. As to quaternary structure, heterodimer of HisH and HisF.

Its subcellular location is the cytoplasm. The catalysed reaction is 5-[(5-phospho-1-deoxy-D-ribulos-1-ylimino)methylamino]-1-(5-phospho-beta-D-ribosyl)imidazole-4-carboxamide + L-glutamine = D-erythro-1-(imidazol-4-yl)glycerol 3-phosphate + 5-amino-1-(5-phospho-beta-D-ribosyl)imidazole-4-carboxamide + L-glutamate + H(+). Its pathway is amino-acid biosynthesis; L-histidine biosynthesis; L-histidine from 5-phospho-alpha-D-ribose 1-diphosphate: step 5/9. Functionally, IGPS catalyzes the conversion of PRFAR and glutamine to IGP, AICAR and glutamate. The HisF subunit catalyzes the cyclization activity that produces IGP and AICAR from PRFAR using the ammonia provided by the HisH subunit. The chain is Imidazole glycerol phosphate synthase subunit HisF from Methylobacterium nodulans (strain LMG 21967 / CNCM I-2342 / ORS 2060).